The sequence spans 858 residues: DNA mismatch repair protein MutS (858 aa).

613–620 (GPNMAGKS) contributes to the ATP binding site.

It belongs to the DNA mismatch repair MutS family.

In terms of biological role, this protein is involved in the repair of mismatches in DNA. It is possible that it carries out the mismatch recognition step. This protein has a weak ATPase activity. The chain is DNA mismatch repair protein MutS from Dehalococcoides mccartyi (strain ATCC BAA-2100 / JCM 16839 / KCTC 5957 / BAV1).